The following is a 103-amino-acid chain: Large ribosomal subunit protein bL21 (103 aa).

Belongs to the bacterial ribosomal protein bL21 family. In terms of assembly, part of the 50S ribosomal subunit. Contacts protein L20.

In terms of biological role, this protein binds to 23S rRNA in the presence of protein L20. In Methylococcus capsulatus (strain ATCC 33009 / NCIMB 11132 / Bath), this protein is Large ribosomal subunit protein bL21.